The sequence spans 251 residues: Segregation and condensation protein A (251 aa).

It belongs to the ScpA family. In terms of assembly, component of a cohesin-like complex composed of ScpA, ScpB and the Smc homodimer, in which ScpA and ScpB bind to the head domain of Smc. The presence of the three proteins is required for the association of the complex with DNA.

Its subcellular location is the cytoplasm. Functionally, participates in chromosomal partition during cell division. May act via the formation of a condensin-like complex containing Smc and ScpB that pull DNA away from mid-cell into both cell halves. This Clostridium botulinum (strain Alaska E43 / Type E3) protein is Segregation and condensation protein A.